The sequence spans 251 residues: Triosephosphate isomerase (251 aa).

Asn10 and Lys12 together coordinate substrate. Residue His95 is the Electrophile of the active site. Glu167 (proton acceptor) is an active-site residue.

This sequence belongs to the triosephosphate isomerase family. As to quaternary structure, homodimer.

The enzyme catalyses D-glyceraldehyde 3-phosphate = dihydroxyacetone phosphate. It functions in the pathway carbohydrate biosynthesis; gluconeogenesis. The protein operates within carbohydrate degradation; glycolysis; D-glyceraldehyde 3-phosphate from glycerone phosphate: step 1/1. The sequence is that of Triosephosphate isomerase (TPI) from Coprinopsis cinerea (strain Okayama-7 / 130 / ATCC MYA-4618 / FGSC 9003) (Inky cap fungus).